Here is a 1324-residue protein sequence, read N- to C-terminus: DNA-directed RNA polymerase subunit beta' (1324 aa).

Positions 219, 292, 299, and 302 each coordinate Zn(2+). A disordered region spans residues Ala1293–Phe1324. Positions Asp1302 to Phe1324 are enriched in acidic residues.

This sequence belongs to the RNA polymerase beta' chain family. RpoC2 subfamily. In cyanobacteria the RNAP catalytic core is composed of 2 alpha, 1 beta, 1 beta', 1 gamma and 1 omega subunit. When a sigma factor is associated with the core the holoenzyme is formed, which can initiate transcription. It depends on Zn(2+) as a cofactor.

The catalysed reaction is RNA(n) + a ribonucleoside 5'-triphosphate = RNA(n+1) + diphosphate. Functionally, DNA-dependent RNA polymerase catalyzes the transcription of DNA into RNA using the four ribonucleoside triphosphates as substrates. The sequence is that of DNA-directed RNA polymerase subunit beta' from Thermosynechococcus vestitus (strain NIES-2133 / IAM M-273 / BP-1).